A 629-amino-acid chain; its full sequence is tRNA uridine 5-carboxymethylaminomethyl modification enzyme MnmG (629 aa).

11 to 16 contributes to the FAD binding site; that stretch reads GGGHAG. 273–287 lines the NAD(+) pocket; sequence GPRYCPSFEDKAVRF.

The protein belongs to the MnmG family. In terms of assembly, homodimer. Heterotetramer of two MnmE and two MnmG subunits. FAD is required as a cofactor.

It is found in the cytoplasm. In terms of biological role, NAD-binding protein involved in the addition of a carboxymethylaminomethyl (cmnm) group at the wobble position (U34) of certain tRNAs, forming tRNA-cmnm(5)s(2)U34. The protein is tRNA uridine 5-carboxymethylaminomethyl modification enzyme MnmG of Mycoplasma mycoides subsp. mycoides SC (strain CCUG 32753 / NCTC 10114 / PG1).